The sequence spans 208 residues: Large ribosomal subunit protein uL4 (208 aa).

The disordered stretch occupies residues 49–78 (KAKGISDISGTTAKPYRQKHTGRARQGSLR).

It belongs to the universal ribosomal protein uL4 family. Part of the 50S ribosomal subunit.

One of the primary rRNA binding proteins, this protein initially binds near the 5'-end of the 23S rRNA. It is important during the early stages of 50S assembly. It makes multiple contacts with different domains of the 23S rRNA in the assembled 50S subunit and ribosome. Its function is as follows. Forms part of the polypeptide exit tunnel. This is Large ribosomal subunit protein uL4 from Anaplasma phagocytophilum (strain HZ).